An 82-amino-acid polypeptide reads, in one-letter code: Sec-independent protein translocase protein TatA (82 aa).

The chain crosses the membrane as a helical span at residues 1–21 (MGGISIWQLLIIAVIIVLLFG). Residues 48 to 82 (PAKEAKKDADFVPQNLEKKEAETVEKQKQNDKEQA) are disordered.

Belongs to the TatA/E family. In terms of assembly, the Tat system comprises two distinct complexes: a TatABC complex, containing multiple copies of TatA, TatB and TatC subunits, and a separate TatA complex, containing only TatA subunits. Substrates initially bind to the TatABC complex, which probably triggers association of the separate TatA complex to form the active translocon.

It localises to the cell inner membrane. Part of the twin-arginine translocation (Tat) system that transports large folded proteins containing a characteristic twin-arginine motif in their signal peptide across membranes. TatA could form the protein-conducting channel of the Tat system. The protein is Sec-independent protein translocase protein TatA of Aliivibrio fischeri (strain ATCC 700601 / ES114) (Vibrio fischeri).